A 124-amino-acid chain; its full sequence is Small ribosomal subunit protein uS13 (124 aa).

Residues 94 to 117 (NLPVRGQRTRTNARTRKGPRKTVA) show a composition bias toward basic residues. A disordered region spans residues 94 to 124 (NLPVRGQRTRTNARTRKGPRKTVANKKIESK).

The protein belongs to the universal ribosomal protein uS13 family. In terms of assembly, part of the 30S ribosomal subunit. Forms a loose heterodimer with protein S19. Forms two bridges to the 50S subunit in the 70S ribosome.

Its function is as follows. Located at the top of the head of the 30S subunit, it contacts several helices of the 16S rRNA. In the 70S ribosome it contacts the 23S rRNA (bridge B1a) and protein L5 of the 50S subunit (bridge B1b), connecting the 2 subunits; these bridges are implicated in subunit movement. Contacts the tRNAs in the A and P-sites. This Mycoplasma pneumoniae (strain ATCC 29342 / M129 / Subtype 1) (Mycoplasmoides pneumoniae) protein is Small ribosomal subunit protein uS13.